A 21-amino-acid chain; its full sequence is Histone H2B 1 (21 aa).

The interval 1–21 is disordered; sequence MPDPAKTAPKKGSKKAVTKXA. Residues Lys-6 and Lys-11 each carry the N6-acetyllysine modification. Over residues 8–21 the composition is skewed to basic residues; it reads APKKGSKKAVTKXA. Ser-13 bears the Phosphoserine mark. An N6-acetyllysine mark is found at Lys-14 and Lys-19. Lys-19 is covalently cross-linked (Glycyl lysine isopeptide (Lys-Gly) (interchain with G-Cter in ubiquitin)).

Belongs to the histone H2B family. As to quaternary structure, the nucleosome is a histone octamer containing two molecules each of H2A, H2B, H3 and H4 assembled in one H3-H4 heterotetramer and two H2A-H2B heterodimers. The octamer wraps approximately 147 bp of DNA. Monoubiquitination at the C-terminal Lys gives a specific tag for epigenetic transcriptional activation and is also prerequisite for histone H3 'Lys-4' and 'Lys-79' methylation. Post-translationally, phosphorylated during apoptosis; which facilitates apoptotic chromatin condensation.

It localises to the nucleus. It is found in the chromosome. In terms of biological role, core component of nucleosome. Nucleosomes wrap and compact DNA into chromatin, limiting DNA accessibility to the cellular machineries which require DNA as a template. Histones thereby play a central role in transcription regulation, DNA repair, DNA replication and chromosomal stability. DNA accessibility is regulated via a complex set of post-translational modifications of histones, also called histone code, and nucleosome remodeling. Has broad-spectrum antimicrobial and antibacterial activity. It is important in the antimicrobial defenses of fish skin and possesses strong activity against saprolegnia, the most common fungal infection in fish. It is also inhibitory to fish bacterial pathogens, such as aeromonas hydrophila, vibrio alginolyticus and E.coli D31. The chain is Histone H2B 1 from Ictalurus punctatus (Channel catfish).